The sequence spans 247 residues: Sugar fermentation stimulation protein homolog (247 aa).

The protein belongs to the SfsA family.

The protein is Sugar fermentation stimulation protein homolog of Aeromonas hydrophila subsp. hydrophila (strain ATCC 7966 / DSM 30187 / BCRC 13018 / CCUG 14551 / JCM 1027 / KCTC 2358 / NCIMB 9240 / NCTC 8049).